The primary structure comprises 415 residues: MDRAFCGNFYYNGKFDYLEVTVKDGVIESIKKDAGNIARSYLPGAVLPAATDIHVHFRTPGETDKEDFSTGSLSAIFGGTTLVMDMPNNIIPIKDYNAFSDKLGVINGTSYSDFALYSMETGSNSLIVDSRSIGLKVYLGGSTNAAGTMAIPDQEAEMINEKGFTVIFHGELEECLRKHQSETKNLREHNLSRPIECELAAAGYVGSLNLKSKIMAHVSSPEVSGDFLREVTPHHLLLNDEMPLGSIGKVNPPLRDRNTQERLLYAYISGQFDILSSDHAPHTEKDKAEFEYAKSGIIGVETRIPLMLALVKKKILFLDVLYKTGIERPPSIFGIRKGKIEVGYDADFMCVDFTNEKKVNEDRLHSKLPRSPFNGMDAIFPSHVVMRGEVVIDNYEEISDPLGRFVPKGYYDQKL.

Positions 54 and 56 each coordinate Zn(2+). Substrate-binding positions include 56–58 (HFR) and Asn-88. 4 residues coordinate Zn(2+): Lys-136, His-169, His-217, and Asp-278. N6-carboxylysine is present on Lys-136. The active site involves Asp-278. Position 282 (His-282) interacts with substrate.

The protein belongs to the metallo-dependent hydrolases superfamily. DHOase family. Class I DHOase subfamily. Zn(2+) serves as cofactor.

It carries out the reaction (S)-dihydroorotate + H2O = N-carbamoyl-L-aspartate + H(+). Its pathway is pyrimidine metabolism; UMP biosynthesis via de novo pathway; (S)-dihydroorotate from bicarbonate: step 3/3. In terms of biological role, catalyzes the reversible cyclization of carbamoyl aspartate to dihydroorotate. The chain is Dihydroorotase from Thermoplasma volcanium (strain ATCC 51530 / DSM 4299 / JCM 9571 / NBRC 15438 / GSS1).